The following is a 166-amino-acid chain: Interleukin-2 (166 aa).

An N-terminal signal peptide occupies residues 1–20; it reads MYSMQLASCVTLTLVLLVNS. Thr-23 carries O-linked (GalNAc...) threonine glycosylation. The cysteines at positions 89 and 137 are disulfide-linked.

The protein belongs to the IL-2 family.

The protein resides in the secreted. Its function is as follows. Cytokine produced by activated CD4-positive helper T-cells and to a lesser extend activated CD8-positive T-cells and natural killer (NK) cells that plays pivotal roles in the immune response and tolerance. Binds to a receptor complex composed of either the high-affinity trimeric IL-2R (IL2RA/CD25, IL2RB/CD122 and IL2RG/CD132) or the low-affinity dimeric IL-2R (IL2RB and IL2RG). Interaction with the receptor leads to oligomerization and conformation changes in the IL-2R subunits resulting in downstream signaling starting with phosphorylation of JAK1 and JAK3. In turn, JAK1 and JAK3 phosphorylate the receptor to form a docking site leading to the phosphorylation of several substrates including STAT5. This process leads to activation of several pathways including STAT, phosphoinositide-3-kinase/PI3K and mitogen-activated protein kinase/MAPK pathways. Functions as a T-cell growth factor and can increase NK-cell cytolytic activity as well. Promotes strong proliferation of activated B-cells and subsequently immunoglobulin production. Plays a pivotal role in regulating the adaptive immune system by controlling the survival and proliferation of regulatory T-cells, which are required for the maintenance of immune tolerance. Moreover, participates in the differentiation and homeostasis of effector T-cell subsets, including Th1, Th2, Th17 as well as memory CD8-positive T-cells. The polypeptide is Interleukin-2 (Il2) (Mus spretus (Western Mediterranean mouse)).